The primary structure comprises 300 residues: 4-hydroxy-tetrahydrodipicolinate synthase (300 aa).

Position 45 (Thr45) interacts with pyruvate. Tyr140 acts as the Proton donor/acceptor in catalysis. The active-site Schiff-base intermediate with substrate is the Lys169. Ile210 is a binding site for pyruvate.

Belongs to the DapA family. As to quaternary structure, homotetramer; dimer of dimers.

It localises to the cytoplasm. It catalyses the reaction L-aspartate 4-semialdehyde + pyruvate = (2S,4S)-4-hydroxy-2,3,4,5-tetrahydrodipicolinate + H2O + H(+). The protein operates within amino-acid biosynthesis; L-lysine biosynthesis via DAP pathway; (S)-tetrahydrodipicolinate from L-aspartate: step 3/4. In terms of biological role, catalyzes the condensation of (S)-aspartate-beta-semialdehyde [(S)-ASA] and pyruvate to 4-hydroxy-tetrahydrodipicolinate (HTPA). This is 4-hydroxy-tetrahydrodipicolinate synthase from Helicobacter pylori (strain Shi470).